We begin with the raw amino-acid sequence, 486 residues long: Small ribosomal subunit protein uS4m (486 aa).

Residues 103–172 (KRLDFALFRA…AKKPSFQEAL (70 aa)) form the S4 RNA-binding domain.

It belongs to the universal ribosomal protein uS4 family. As to quaternary structure, component of the mitochondrial small ribosomal subunit (mt-SSU). Mature yeast 74S mitochondrial ribosomes consist of a small (37S) and a large (54S) subunit. The 37S small subunit contains a 15S ribosomal RNA (15S mt-rRNA) and 34 different proteins. The 54S large subunit contains a 21S rRNA (21S mt-rRNA) and 46 different proteins. uS3m, uS4m and uS5m form the narrow entry site of the mRNA channel.

The protein localises to the mitochondrion. Component of the mitochondrial ribosome (mitoribosome), a dedicated translation machinery responsible for the synthesis of mitochondrial genome-encoded proteins, including at least some of the essential transmembrane subunits of the mitochondrial respiratory chain. The mitoribosomes are attached to the mitochondrial inner membrane and translation products are cotranslationally integrated into the membrane. The polypeptide is Small ribosomal subunit protein uS4m (NAM9) (Saccharomyces cerevisiae (strain ATCC 204508 / S288c) (Baker's yeast)).